Here is a 135-residue protein sequence, read N- to C-terminus: Small ribosomal subunit protein uS12 (135 aa).

Aspartate 89 carries the post-translational modification 3-methylthioaspartic acid. Residues 106 to 135 (GVKDRKQGRSKYGAKRPKPGQAPAAAGKKK) form a disordered region. The segment covering 113-123 (GRSKYGAKRPK) has biased composition (basic residues). A compositionally biased stretch (low complexity) spans 124-135 (PGQAPAAAGKKK).

This sequence belongs to the universal ribosomal protein uS12 family. As to quaternary structure, part of the 30S ribosomal subunit. Contacts proteins S8 and S17. May interact with IF1 in the 30S initiation complex.

In terms of biological role, with S4 and S5 plays an important role in translational accuracy. Its function is as follows. Interacts with and stabilizes bases of the 16S rRNA that are involved in tRNA selection in the A site and with the mRNA backbone. Located at the interface of the 30S and 50S subunits, it traverses the body of the 30S subunit contacting proteins on the other side and probably holding the rRNA structure together. The combined cluster of proteins S8, S12 and S17 appears to hold together the shoulder and platform of the 30S subunit. The chain is Small ribosomal subunit protein uS12 from Synechococcus sp. (strain JA-3-3Ab) (Cyanobacteria bacterium Yellowstone A-Prime).